The chain runs to 226 residues: Protein-L-isoaspartate O-methyltransferase (226 aa).

Ser66 is a catalytic residue.

Belongs to the methyltransferase superfamily. L-isoaspartyl/D-aspartyl protein methyltransferase family.

It localises to the cytoplasm. It carries out the reaction [protein]-L-isoaspartate + S-adenosyl-L-methionine = [protein]-L-isoaspartate alpha-methyl ester + S-adenosyl-L-homocysteine. Functionally, catalyzes the methyl esterification of L-isoaspartyl residues in peptides and proteins that result from spontaneous decomposition of normal L-aspartyl and L-asparaginyl residues. It plays a role in the repair and/or degradation of damaged proteins. This Methanopyrus kandleri (strain AV19 / DSM 6324 / JCM 9639 / NBRC 100938) protein is Protein-L-isoaspartate O-methyltransferase.